The sequence spans 303 residues: ATP phosphoribosyltransferase (303 aa).

The protein belongs to the ATP phosphoribosyltransferase family. Long subfamily. The cofactor is Mg(2+).

The protein localises to the cytoplasm. The enzyme catalyses 1-(5-phospho-beta-D-ribosyl)-ATP + diphosphate = 5-phospho-alpha-D-ribose 1-diphosphate + ATP. It participates in amino-acid biosynthesis; L-histidine biosynthesis; L-histidine from 5-phospho-alpha-D-ribose 1-diphosphate: step 1/9. Feedback inhibited by histidine. Catalyzes the condensation of ATP and 5-phosphoribose 1-diphosphate to form N'-(5'-phosphoribosyl)-ATP (PR-ATP). Has a crucial role in the pathway because the rate of histidine biosynthesis seems to be controlled primarily by regulation of HisG enzymatic activity. This chain is ATP phosphoribosyltransferase, found in Haemophilus influenzae (strain PittGG).